Consider the following 644-residue polypeptide: MGKIIGIDLGTTNSCVSVVENNAPKVVENAEGGRTTPSIIAYVEDGEVLVGAPAKRQSVTNPKNTIYAVKRLMGRKFTDPEVQKDIGLMPYSIIAADNGDAWVEARDRKMAPQQVSAEILRKMKKTAEDYLGEEVTEAVITVPAYFNDSQRQATKDAGRIAGLDVKRIINEPTAAALAFGLDKQDKVDRKIAVYDLGGGTFDVSIIEIANVDGEKQFEVLSTNGDTFLGGEDFDQRIIDWIIAEFKKEQGVDLSKDVLALQRLKDAAEKAKIELSSAQQTEINLPYVTADASGPKHLNLKLTRAKLESLVEELINRTAGPCLTAIKDAGVNVSEIDDVILVGGQTRMPAVQDKVKEIFGKEPRKDVNPDEAVAVGAAIQGSVLSGDRKDVLLLDVTPLSLGIETLGGVMTKMIPKNTTIPTKHSQVYSTAEDNQPAVTIKCFQGEREMAAANKLLGEFNLEGIAPAQRGMPQIEVTFDIDANGILHVTAKDKTTGKENKITIKANSGLTEEEIQRMVKDAEANAAEDKKALELVTARNTADALAHSTKKALEEHGASLEASEKEAIEAALKELDEAIKGSDKEAIEAKTEALGKASQKLGEKVMAAEQAKSGGAAPGAAPGGAQQAAPDADVVDADFKEVDDKK.

T200 is subject to Phosphothreonine; by autocatalysis. A disordered region spans residues 603 to 644 (VMAAEQAKSGGAAPGAAPGGAQQAAPDADVVDADFKEVDDKK). Over residues 612 to 630 (GGAAPGAAPGGAQQAAPDA) the composition is skewed to low complexity. The segment covering 635–644 (ADFKEVDDKK) has biased composition (basic and acidic residues).

Belongs to the heat shock protein 70 family.

Acts as a chaperone. The chain is Chaperone protein DnaK from Polynucleobacter asymbioticus (strain DSM 18221 / CIP 109841 / QLW-P1DMWA-1) (Polynucleobacter necessarius subsp. asymbioticus).